Here is a 179-residue protein sequence, read N- to C-terminus: Large ribosomal subunit protein uL5 (179 aa).

Belongs to the universal ribosomal protein uL5 family. In terms of assembly, part of the 50S ribosomal subunit; part of the 5S rRNA/L5/L18/L25 subcomplex. Contacts the 5S rRNA and the P site tRNA. Forms a bridge to the 30S subunit in the 70S ribosome.

Functionally, this is one of the proteins that bind and probably mediate the attachment of the 5S RNA into the large ribosomal subunit, where it forms part of the central protuberance. In the 70S ribosome it contacts protein S13 of the 30S subunit (bridge B1b), connecting the 2 subunits; this bridge is implicated in subunit movement. Contacts the P site tRNA; the 5S rRNA and some of its associated proteins might help stabilize positioning of ribosome-bound tRNAs. This Variovorax paradoxus (strain S110) protein is Large ribosomal subunit protein uL5.